Reading from the N-terminus, the 777-residue chain is Endonuclease MutS2 (777 aa).

Residue 328–335 participates in ATP binding; the sequence is GPNTGGKT. The region spanning 702–777 is the Smr domain; the sequence is LDIRGMNTLE…GDGATEVYLK (76 aa).

The protein belongs to the DNA mismatch repair MutS family. MutS2 subfamily. Homodimer. Binds to stalled ribosomes, contacting rRNA.

In terms of biological role, endonuclease that is involved in the suppression of homologous recombination and thus may have a key role in the control of bacterial genetic diversity. Functionally, acts as a ribosome collision sensor, splitting the ribosome into its 2 subunits. Detects stalled/collided 70S ribosomes which it binds and splits by an ATP-hydrolysis driven conformational change. Acts upstream of the ribosome quality control system (RQC), a ribosome-associated complex that mediates the extraction of incompletely synthesized nascent chains from stalled ribosomes and their subsequent degradation. Probably generates substrates for RQC. The protein is Endonuclease MutS2 of Carboxydothermus hydrogenoformans (strain ATCC BAA-161 / DSM 6008 / Z-2901).